The chain runs to 123 residues: Immunoglobulin lambda variable 9-49 (123 aa).

Residues M1 to S19 form the signal peptide. Positions Q20 to S44 are framework-1. Positions P21–V123 constitute an Ig-like domain. An intrachain disulfide couples C41 to C112. The tract at residues S45–K51 is complementarity-determining-1. Positions V52–R68 are framework-2. The tract at residues V69–G76 is complementarity-determining-2. The tract at residues S77–C112 is framework-3. Position 96 is a phosphotyrosine (Y96). T98 carries the phosphothreonine modification. The tract at residues G113–V123 is complementarity-determining-3.

Immunoglobulins are composed of two identical heavy chains and two identical light chains; disulfide-linked.

It localises to the secreted. Its subcellular location is the cell membrane. In terms of biological role, v region of the variable domain of immunoglobulin light chains that participates in the antigen recognition. Immunoglobulins, also known as antibodies, are membrane-bound or secreted glycoproteins produced by B lymphocytes. In the recognition phase of humoral immunity, the membrane-bound immunoglobulins serve as receptors which, upon binding of a specific antigen, trigger the clonal expansion and differentiation of B lymphocytes into immunoglobulins-secreting plasma cells. Secreted immunoglobulins mediate the effector phase of humoral immunity, which results in the elimination of bound antigens. The antigen binding site is formed by the variable domain of one heavy chain, together with that of its associated light chain. Thus, each immunoglobulin has two antigen binding sites with remarkable affinity for a particular antigen. The variable domains are assembled by a process called V-(D)-J rearrangement and can then be subjected to somatic hypermutations which, after exposure to antigen and selection, allow affinity maturation for a particular antigen. In Homo sapiens (Human), this protein is Immunoglobulin lambda variable 9-49.